A 505-amino-acid polypeptide reads, in one-letter code: Maturase K (505 aa).

Belongs to the intron maturase 2 family. MatK subfamily.

It is found in the plastid. Its subcellular location is the chloroplast. Functionally, usually encoded in the trnK tRNA gene intron. Probably assists in splicing its own and other chloroplast group II introns. The chain is Maturase K from Apocynum androsaemifolium (Spreading dogbane).